The following is a 60-amino-acid chain: uncharacterized protein (60 aa).

The tract at residues 27 to 50 (VKNNNNNNNNNNNNNNNNNNNNNK) is disordered. Residues 29 to 49 (NNNNNNNNNNNNNNNNNNNNN) show a composition bias toward low complexity.

This is an uncharacterized protein from Dictyostelium discoideum (Social amoeba).